Consider the following 85-residue polypeptide: UPF0297 protein Clos_1665 (85 aa).

It belongs to the UPF0297 family.

This is UPF0297 protein Clos_1665 from Alkaliphilus oremlandii (strain OhILAs) (Clostridium oremlandii (strain OhILAs)).